Here is a 579-residue protein sequence, read N- to C-terminus: Rop guanine nucleotide exchange factor 6 (579 aa).

The segment covering 31–61 (ESTTDSSLSSSSSGVGSSSGRSSVAERSVSS) has biased composition (low complexity). A disordered region spans residues 31-89 (ESTTDSSLSSSSSGVGSSSGRSSVAERSVSSPPTKSQILGWPLGQGSWRKSSGKMKKKT). The PRONE domain occupies 98–479 (FKRVGTETSE…DISKDDGDGD (382 aa)).

In terms of biological role, guanine-nucleotide exchange factor (GEF) that acts as an activator of Rop (Rho of plants) GTPases by promoting the exchange of GDP for GTP. The polypeptide is Rop guanine nucleotide exchange factor 6 (ROPGEF6) (Arabidopsis thaliana (Mouse-ear cress)).